The primary structure comprises 237 residues: MLGFDLGRTGYEDAFTLQKQVQAMVQSGGDDILLLLEHPPTVSIGKNSGAENVPPHLQDMWNGHVDIVHSTRGGNVTCHFPGQLVAYPVISLKKRSGGIRAYVHDLEEAAIRMLARFGVTAARRQGFPGVWTGERKIASLGIAVSRYVTMHGMALNVAEDLSLFNIISPCGLEGVAATSIARETAGPVPDMPAVKTAFLEEFYHIFQPAGDHAQPLPTLRTTQDLMTLLQDAQRTEK.

Positions 27 to 210 (SGGDDILLLL…EFYHIFQPAG (184 aa)) constitute a BPL/LPL catalytic domain. Residues 72-79 (RGGNVTCH), 139-141 (SLG), and 152-154 (GMA) contribute to the substrate site. Residue C170 is the Acyl-thioester intermediate of the active site.

This sequence belongs to the LipB family.

The protein localises to the cytoplasm. The catalysed reaction is octanoyl-[ACP] + L-lysyl-[protein] = N(6)-octanoyl-L-lysyl-[protein] + holo-[ACP] + H(+). Its pathway is protein modification; protein lipoylation via endogenous pathway; protein N(6)-(lipoyl)lysine from octanoyl-[acyl-carrier-protein]: step 1/2. Its function is as follows. Catalyzes the transfer of endogenously produced octanoic acid from octanoyl-acyl-carrier-protein onto the lipoyl domains of lipoate-dependent enzymes. Lipoyl-ACP can also act as a substrate although octanoyl-ACP is likely to be the physiological substrate. The protein is Octanoyltransferase of Desulfovibrio desulfuricans (strain ATCC 27774 / DSM 6949 / MB).